An 87-amino-acid polypeptide reads, in one-letter code: Small ribosomal subunit protein uS15c (87 aa).

This sequence belongs to the universal ribosomal protein uS15 family. In terms of assembly, part of the 30S ribosomal subunit.

The protein resides in the plastid. The protein localises to the chloroplast. The sequence is that of Small ribosomal subunit protein uS15c (rps15) from Coffea arabica (Arabian coffee).